Here is a 349-residue protein sequence, read N- to C-terminus: MIENRKEEHIKIAENENVVSEHNFWDDIRIVHRAIPEVDFNDIDTGVKFLGKQFNYPILISSMTGGTETAKIINKNLAMTAEHFKIGMGVGSMRVAVKNKNTADTFSVINDYKIPAKFANIGAPQLVRQDSDSLSDNDIEYIYNLINADFLIVHFNFLQEMVQPEGDRNSKGVIKRLKDIAGSYNVIAKETGSGFSKEDALSLLDAGVKAIDVGGLGGTSFAAIEYYRAQKANDEIKMHTGKAFWNWGIPSPASIKYCSLGEPVIGSGGLRNGLDLAKAIMFGATLGGFARELLKDANTSFDDVKRQMEMIINDLKITMMLTSSRNIDELKHARYITLEPLRSWLEVYK.

A substrate-binding site is contributed by 5–6 (RK). FMN contacts are provided by residues serine 61, 62-64 (SMT), serine 92, and asparagine 120. 92-94 (SMR) contributes to the substrate binding site. Glutamine 159 contacts substrate. Glutamate 160 is a Mg(2+) binding site. FMN is bound by residues lysine 189, threonine 219, 269–271 (GLR), and 290–291 (AR).

This sequence belongs to the IPP isomerase type 2 family. Homooctamer. Dimer of tetramers. FMN serves as cofactor. It depends on NADPH as a cofactor. The cofactor is Mg(2+).

The protein localises to the cytoplasm. The enzyme catalyses isopentenyl diphosphate = dimethylallyl diphosphate. In terms of biological role, involved in the biosynthesis of isoprenoids. Catalyzes the 1,3-allylic rearrangement of the homoallylic substrate isopentenyl (IPP) to its allylic isomer, dimethylallyl diphosphate (DMAPP). This chain is Isopentenyl-diphosphate delta-isomerase, found in Picrophilus torridus (strain ATCC 700027 / DSM 9790 / JCM 10055 / NBRC 100828 / KAW 2/3).